Consider the following 740-residue polypeptide: MPDDVGPAEAEVSGAVSESDNEYDETEVTTKDDDDEKMAERSVASEGVETNGDQKKKYDPKDPLRPRRKKARRACYACQRAHLTCGDERPCQRCIKRGLAEACQDGVRKKAKYLHDAPPEALRPVLGPNYNPAAAVSVRNGHRHPSNAGSDAGSSIGTFYSQSTQYPVFSSAATQLGSIPENLPFPQQSPVSPTFQPSSNPQLGSIGVSSVSSPMNSFPPALFDPSNPAIFNFNLEGLNFGSQYGAMEFGMLGHMSSGAAETPPRDPSMAQQGTSDVGFNPSGVFGNGLNQFEKVYDNNTGLISDFLTLDAHSNGLYSQGNLQHGLPHAYAIPAGPTSLQSPSTENNSPQPTGFGFESPTATNYTGVPGAAGNQPGSQQPRAQKPKTPALGKLGPQSVLGKRQRDPSSIYEAVKEPFQYVASFHKLISLLQNRFSGASTISIVRSLASIRPSFMSCMKTLNRADLIFMEKSFQRALFEHEEFMHQSPSPAIACRRTGEIAAVNKEFTALTGWTKDVLLGKTLNLNANMGGTNSDTLSISSKGGRGGIVGTTPRLKPLHPEQGTNADSQQQQSQQHKEQPQPVFLAELMDEASVTQFYEDYAQLAFTHSRGTVVRKCRLLKYRTQENMDAAAAAAAAASAPTASGGSGSSNGTVVNGGPDSSPAGKTEKERPTGVNVASNSILSNRVAKIDGEHGISKLERDGKLECSYTWTIKRDVFDIPMIIMINFLPCYYRSHNQLAV.

The tract at residues 1 to 66 (MPDDVGPAEA…KYDPKDPLRP (66 aa)) is disordered. Positions 19–37 (SDNEYDETEVTTKDDDDEK) are enriched in acidic residues. Residues 52–65 (GDQKKKYDPKDPLR) show a composition bias toward basic and acidic residues. The segment at residues 75-103 (CYACQRAHLTCGDERPCQRCIKRGLAEAC) is a DNA-binding region (zn(2)-C6 fungal-type). Disordered stretches follow at residues 333–405 (PAGP…RQRD), 532–579 (NSDT…KEQP), and 639–674 (APTASGGSGSSNGTVVNGGPDSSPAGKTEKERPTGV). Residues 337–351 (TSLQSPSTENNSPQP) show a composition bias toward polar residues. The PAS domain maps to 475 to 546 (ALFEHEEFMH…SISSKGGRGG (72 aa)). Positions 639–658 (APTASGGSGSSNGTVVNGGP) are enriched in low complexity.

The protein belongs to the ERT1/acuK family.

The protein localises to the nucleus. Its function is as follows. Transcription factor which regulates nonfermentable carbon utilization. Activator of gluconeogenetic genes. This is Transcription activator of gluconeogenesis NCU03938 from Neurospora crassa (strain ATCC 24698 / 74-OR23-1A / CBS 708.71 / DSM 1257 / FGSC 987).